The sequence spans 349 residues: Phosphate carrier protein, mitochondrial (349 aa).

Solcar repeat units lie at residues 47–131 (KYFA…FKVQ), 144–229 (YRTF…TVEL), and 246–324 (EQLV…VKVW). The next 6 helical transmembrane spans lie at 48–68 (YFAL…TAVV), 108–128 (APTF…YEVF), 147–167 (FVYL…LSPL), 207–227 (PLWG…EKTV), 248–268 (LVVT…VSHP), and 304–324 (IIMI…VKVW).

This sequence belongs to the mitochondrial carrier (TC 2.A.29) family.

It localises to the mitochondrion inner membrane. Transport of phosphate groups from the cytosol to the mitochondrial matrix. In Choristoneura fumiferana (Spruce budworm moth), this protein is Phosphate carrier protein, mitochondrial.